Here is a 447-residue protein sequence, read N- to C-terminus: Argininosuccinate synthase (447 aa).

Residues 17 to 25 (AFSGGLDTS) and A43 each bind ATP. Y99 serves as a coordination point for L-citrulline. G129 and T131 together coordinate ATP. T131, N135, and D136 together coordinate L-aspartate. N135 is a binding site for L-citrulline. D136 lines the ATP pocket. R139 and S192 together coordinate L-citrulline. ATP is bound at residue D194. Positions 201, 203, and 280 each coordinate L-citrulline.

Belongs to the argininosuccinate synthase family. Type 2 subfamily. In terms of assembly, homotetramer.

The protein localises to the cytoplasm. It catalyses the reaction L-citrulline + L-aspartate + ATP = 2-(N(omega)-L-arginino)succinate + AMP + diphosphate + H(+). Its pathway is amino-acid biosynthesis; L-arginine biosynthesis; L-arginine from L-ornithine and carbamoyl phosphate: step 2/3. The protein is Argininosuccinate synthase of Salmonella schwarzengrund (strain CVM19633).